A 91-amino-acid polypeptide reads, in one-letter code: B3 domain-containing protein Os03g0164300 (91 aa).

The segment at residues 1-91 (MTNAKMTFAV…VLVLKVHVLK (91 aa)) is a DNA-binding region (TF-B3).

Its subcellular location is the nucleus. The protein is B3 domain-containing protein Os03g0164300 of Oryza sativa subsp. japonica (Rice).